A 432-amino-acid polypeptide reads, in one-letter code: MRNPIIDVGAKELSYEIREIVDVAKKIEEFGINITWENIGDPVAKGEKIPDWIKDIIAEIVKNDCSYAYCPTKGLLETREFLAEQVNKRGGVQITAEDIIFFNGLGDAIAKIYGLLKRQVRVINPSPSYSTHSSAEASHAGSPPVTYFLDPYNYWYPDIDDLEKRIKYNPAVSGILVINPDNPTGAVYPKKILNEIVDLANEYDLFIICDEIYCNLVYNGKKQHLLCEVIDDVCGLSLKGISKELPWPGARCGWIEIYNADKDEEFKKYVESIYKAKLIEVCSTTLPQMAIPRIMGHRNYKKYLEERNRFFEKRSNTAYKKLKDLDGVIANKANGAFYMSVVFEDNYLNGNNSIKIENEKLKEFIEHQIKDASIDKKFVYYLLASTGICVVPLTSFCSQLNGFRVTLLERDDEKFEWIFDTLAEKIDEFLKT.

Position 243 is an N6-(pyridoxal phosphate)lysine (Lys-243).

The protein belongs to the class-II pyridoxal-phosphate-dependent aminotransferase family. The cofactor is pyridoxal 5'-phosphate.

It is found in the cytoplasm. This is an uncharacterized protein from Methanocaldococcus jannaschii (strain ATCC 43067 / DSM 2661 / JAL-1 / JCM 10045 / NBRC 100440) (Methanococcus jannaschii).